We begin with the raw amino-acid sequence, 123 residues long: MPSTGTLVIIFAIVLILCIMLLFFYKAAEARNPGVLPPPIPPPTPPPPKKKYDHNEYMEKTDLEPEVKKNHRKWANEAEHLISSSVKGLENLDETAFLANHKGHGFRTFDHAKSLFKEFLKKY.

A helical transmembrane segment spans residues 5–25 (GTLVIIFAIVLILCIMLLFFY). The tract at residues 33 to 54 (PGVLPPPIPPPTPPPPKKKYDH) is disordered. The span at 35–47 (VLPPPIPPPTPPP) shows a compositional bias: pro residues.

This sequence belongs to the asfivirus CP123L family.

The protein localises to the host membrane. It localises to the virion. This is an uncharacterized protein from African swine fever virus (isolate Warthog/Namibia/Wart80/1980) (ASFV).